The sequence spans 409 residues: Accessory Sec system protein translocase subunit SecY2 (409 aa).

10 helical membrane passes run 16 to 36 (ILIT…PIPG), 61 to 81 (LSQV…MILL), 104 to 124 (VVML…FQYH), 132 to 152 (LLLA…IGNL), 161 to 181 (MTIL…PLIF), 190 to 210 (LAII…ITFE), 242 to 262 (GMAF…IILL), 286 to 306 (GVVI…FVNI), 341 to 361 (LFGT…LLFA), and 374 to 394 (TGIF…FQVI).

The protein belongs to the SecY/SEC61-alpha family. SecY2 subfamily. As to quaternary structure, component of the accessory SecA2/SecY2 protein translocase complex required to export cell wall proteins. May form heterotrimers with SecE and SecG subunits.

The protein resides in the cell membrane. Its function is as follows. Part of the accessory SecA2/SecY2 system specifically required for export of possible cell wall proteins. The central subunit of a protein translocation channel. The polypeptide is Accessory Sec system protein translocase subunit SecY2 (Streptococcus agalactiae serotype III (strain NEM316)).